The chain runs to 379 residues: Adenylosuccinate synthetase (379 aa).

Residues 11–17 (GDEGKGK) and 39–41 (GHT) contribute to the GTP site. Asp12 functions as the Proton acceptor in the catalytic mechanism. Residues Asp12 and Gly39 each contribute to the Mg(2+) site. IMP contacts are provided by residues 12 to 15 (DEGK), 37 to 40 (NAGH), Thr127, Arg141, Gln223, Thr238, and Arg302. His40 acts as the Proton donor in catalysis. A substrate-binding site is contributed by 298–304 (TTTGRGR). Residues Arg304 and 330–332 (KLD) contribute to the GTP site.

This sequence belongs to the adenylosuccinate synthetase family. Homodimer. It depends on Mg(2+) as a cofactor.

The protein localises to the cytoplasm. The catalysed reaction is IMP + L-aspartate + GTP = N(6)-(1,2-dicarboxyethyl)-AMP + GDP + phosphate + 2 H(+). The protein operates within purine metabolism; AMP biosynthesis via de novo pathway; AMP from IMP: step 1/2. In terms of biological role, plays an important role in the de novo pathway of purine nucleotide biosynthesis. Catalyzes the first committed step in the biosynthesis of AMP from IMP. This is Adenylosuccinate synthetase from Methanosarcina mazei (strain ATCC BAA-159 / DSM 3647 / Goe1 / Go1 / JCM 11833 / OCM 88) (Methanosarcina frisia).